The following is a 512-amino-acid chain: Replication initiation protein (512 aa).

In terms of biological role, essential for replication. Binds specifically to a 60-bp region corresponding to the putative origin of replication of pXO2. Also binds nonspecifically to single-stranded DNA with lower affinity. The sequence is that of Replication initiation protein (repS) from Bacillus anthracis.